The following is a 247-amino-acid chain: 2,5-diamino-6-ribosylamino-4(3H)-pyrimidinone 5'-phosphate reductase (247 aa).

Residues Thr-75, Asp-79, Gly-165, and 187–191 (GASII) contribute to the NADP(+) site.

This sequence belongs to the HTP reductase family. As to quaternary structure, homodimer.

The catalysed reaction is 2,5-diamino-6-(1-D-ribitylamino)pyrimidin-4(3H)-one 5'-phosphate + NADP(+) = 2,5-diamino-6-(1-D-ribosylamino)pyrimidin-4(3H)-one 5'-phosphate + NADPH + H(+). It carries out the reaction 2,5-diamino-6-(1-D-ribitylamino)pyrimidin-4(3H)-one 5'-phosphate + NAD(+) = 2,5-diamino-6-(1-D-ribosylamino)pyrimidin-4(3H)-one 5'-phosphate + NADH + H(+). The protein operates within cofactor biosynthesis; riboflavin biosynthesis. Functionally, catalyzes an early step in riboflavin biosynthesis, the NADPH-dependent reduction of the ribose side chain of 2,5-diamino-6-ribosylamino-4(3H)-pyrimidinone 5'-phosphate, yielding 2,5-diamino-6-ribitylamino-4(3H)-pyrimidinone 5'-phosphate. The chain is 2,5-diamino-6-ribosylamino-4(3H)-pyrimidinone 5'-phosphate reductase (RIB7) from Debaryomyces hansenii (strain ATCC 36239 / CBS 767 / BCRC 21394 / JCM 1990 / NBRC 0083 / IGC 2968) (Yeast).